Consider the following 141-residue polypeptide: VLTDAEKKEVTSLWGKASGHAEEYGAEALERLFLSFPTTKTYFSHMDLSKGSAQVKAHGKRVADALTTAAGHFNDMDSALSALSDLHAHKLRVDPVNFKLLAHCFLVVLARHHPAEFTPSAHAAMDKFLSRVATVLTSKYR.

The region spanning 1 to 141 is the Globin domain; that stretch reads VLTDAEKKEV…VATVLTSKYR (141 aa). Histidine 58 serves as a coordination point for O2. Histidine 87 lines the heme b pocket.

This sequence belongs to the globin family. In terms of assembly, heterotetramer of two alpha chains and two beta chains. In terms of tissue distribution, red blood cells.

Functionally, involved in oxygen transport from the lung to the various peripheral tissues. In Tachyglossus aculeatus aculeatus (Southeast Australian short-beaked echidna), this protein is Hemoglobin subunit alpha-1.